The chain runs to 524 residues: GMP synthase [glutamine-hydrolyzing] (524 aa).

One can recognise a Glutamine amidotransferase type-1 domain in the interval 9–207 (RILILDFGSQ…VIHICQCIPN (199 aa)). Catalysis depends on cysteine 86, which acts as the Nucleophile. Active-site residues include histidine 181 and glutamate 183. In terms of domain architecture, GMPS ATP-PPase spans 208 to 399 (WTTKHIIEDS…LGLPADLIYR (192 aa)). 235–241 (SGGVDSA) is an ATP binding site.

In terms of assembly, homodimer.

The catalysed reaction is XMP + L-glutamine + ATP + H2O = GMP + L-glutamate + AMP + diphosphate + 2 H(+). The protein operates within purine metabolism; GMP biosynthesis; GMP from XMP (L-Gln route): step 1/1. In terms of biological role, catalyzes the synthesis of GMP from XMP. This chain is GMP synthase [glutamine-hydrolyzing], found in Coxiella burnetii (strain CbuK_Q154) (Coxiella burnetii (strain Q154)).